The primary structure comprises 168 residues: Transcriptional regulator MraZ (168 aa).

SpoVT-AbrB domains are found at residues 8 to 51 (EYNQ…GGDR) and 90 to 140 (ALNM…KADI).

The protein belongs to the MraZ family. As to quaternary structure, forms oligomers.

The protein resides in the cytoplasm. It localises to the nucleoid. The protein is Transcriptional regulator MraZ of Cereibacter sphaeroides (strain KD131 / KCTC 12085) (Rhodobacter sphaeroides).